Reading from the N-terminus, the 418-residue chain is Serine hydroxymethyltransferase (418 aa).

Residues leucine 121 and 125-127 contribute to the (6S)-5,6,7,8-tetrahydrofolate site; that span reads GHL. Lysine 230 bears the N6-(pyridoxal phosphate)lysine mark. Residues glutamate 246 and 355–357 contribute to the (6S)-5,6,7,8-tetrahydrofolate site; that span reads SPF.

This sequence belongs to the SHMT family. In terms of assembly, homodimer. The cofactor is pyridoxal 5'-phosphate.

It localises to the cytoplasm. It catalyses the reaction (6R)-5,10-methylene-5,6,7,8-tetrahydrofolate + glycine + H2O = (6S)-5,6,7,8-tetrahydrofolate + L-serine. It functions in the pathway one-carbon metabolism; tetrahydrofolate interconversion. The protein operates within amino-acid biosynthesis; glycine biosynthesis; glycine from L-serine: step 1/1. In terms of biological role, catalyzes the reversible interconversion of serine and glycine with tetrahydrofolate (THF) serving as the one-carbon carrier. This reaction serves as the major source of one-carbon groups required for the biosynthesis of purines, thymidylate, methionine, and other important biomolecules. Also exhibits THF-independent aldolase activity toward beta-hydroxyamino acids, producing glycine and aldehydes, via a retro-aldol mechanism. The sequence is that of Serine hydroxymethyltransferase from Streptococcus pneumoniae (strain Taiwan19F-14).